The primary structure comprises 206 residues: Ras-related protein Rab-7a (206 aa).

15–22 (GDSGVGKT) lines the GTP pocket. Phosphoserine is present on residues serine 17 and serine 23. Threonine 34, threonine 40, and threonine 64 each carry phosphothreonine. Residues 34–40 (TQQYRAT) and 63–67 (DTAGQ) contribute to the GTP site. Residues 37 to 45 (YRATVGADF) carry the Effector region motif. The residue at position 72 (serine 72) is a Phosphoserine. 2 positions are modified to phosphotyrosine: tyrosine 78 and tyrosine 88. GTP is bound by residues 125–128 (NKLD) and 157–158 (AK). S-geranylgeranyl cysteine attachment occurs at residues cysteine 205 and cysteine 206.

This sequence belongs to the small GTPase superfamily. Rab family.

It is found in the cytoplasmic vesicle. The protein localises to the phagosome membrane. It localises to the late endosome membrane. The protein resides in the lysosome membrane. Its subcellular location is the autophagosome membrane. It is found in the lipid droplet. It carries out the reaction GTP + H2O = GDP + phosphate + H(+). In terms of biological role, small GTPase which cycles between active GTP-bound and inactive GDP-bound states. In its active state, binds to a variety of effector proteins playing a key role in the regulation of endo-lysosomal trafficking. Governs early-to-late endosomal maturation, microtubule minus-end as well as plus-end directed endosomal migration and positioning, and endosome-lysosome transport through different protein-protein interaction cascades. Involved in lipophagy, a cytosolic lipase-independent autophagic pathway. Plays a role in phagocyte formation and acidification. This Paramecium octaurelia protein is Ras-related protein Rab-7a.